The chain runs to 188 residues: Elongation factor P (188 aa).

Position 34 is an N6-(3,6-diaminohexanoyl)-5-hydroxylysine (lysine 34).

The protein belongs to the elongation factor P family. In terms of processing, may be beta-lysylated on the epsilon-amino group of Lys-34 by the combined action of EpmA and EpmB, and then hydroxylated on the C5 position of the same residue by EpmC (if this protein is present). Lysylation is critical for the stimulatory effect of EF-P on peptide-bond formation. The lysylation moiety may extend toward the peptidyltransferase center and stabilize the terminal 3-CCA end of the tRNA. Hydroxylation of the C5 position on Lys-34 may allow additional potential stabilizing hydrogen-bond interactions with the P-tRNA.

It is found in the cytoplasm. It functions in the pathway protein biosynthesis; polypeptide chain elongation. Functionally, involved in peptide bond synthesis. Alleviates ribosome stalling that occurs when 3 or more consecutive Pro residues or the sequence PPG is present in a protein, possibly by augmenting the peptidyl transferase activity of the ribosome. Modification of Lys-34 is required for alleviation. In Xanthomonas campestris pv. campestris (strain B100), this protein is Elongation factor P.